Reading from the N-terminus, the 432-residue chain is Septin-14 (432 aa).

A Septin-type G domain is found at 49 to 315 (QGFTFNILCV…ECYRYQKLQK (267 aa)). The interval 59–66 (GETGIGKS) is G1 motif. Residues 59–66 (GETGIGKS), Gly-114, 195–203 (KADTISKND), Gly-249, and Arg-264 each bind GTP. The G3 motif stretch occupies residues 111–114 (ETVG). A G4 motif region spans residues 194–197 (AKAD). A coiled-coil region spans residues 332–412 (EIFEAKRQEF…IIDFYKMKAA (81 aa)). The interval 369–432 (EAEKELQDKF…DTKKDKHRKK (64 aa)) is required for interaction with SEPTIN4. Required for migration of cortical neurons during corticogenesis.

Belongs to the TRAFAC class TrmE-Era-EngA-EngB-Septin-like GTPase superfamily. Septin GTPase family. As to quaternary structure, septins polymerize into heterooligomeric protein complexes that form filaments, and can associate with cellular membranes, actin filaments and microtubules. GTPase activity is required for filament formation. Interacts with ACTN4. Interacts with SEPTIN9. Interacts (via C-terminus) with SEPTIN4. As to expression, testis-specific (at protein level).

It is found in the cytoplasm. It localises to the cytoskeleton. The protein resides in the cell projection. The protein localises to the axon. Its subcellular location is the dendrite. It is found in the perikaryon. It localises to the perinuclear region. The protein resides in the cytoplasmic vesicle. The protein localises to the secretory vesicle. Its subcellular location is the acrosome. Functionally, filament-forming cytoskeletal GTPase. Involved in the migration of cortical neurons and the formation of neuron leading processes during embryonic development. Plays a role in sperm head formation during spermiogenesis, potentially via facilitating localization of ACTN4 to cell filaments. The polypeptide is Septin-14 (Homo sapiens (Human)).